The chain runs to 156 residues: Small ribosomal subunit protein uS11 (156 aa).

Positions 1-27 (MSEKEQKEVEAKESSGKAEERRETREK) are disordered.

Belongs to the universal ribosomal protein uS11 family. In terms of assembly, part of the 30S ribosomal subunit.

Located on the platform of the 30S subunit. This chain is Small ribosomal subunit protein uS11, found in Thermofilum pendens (strain DSM 2475 / Hrk 5).